Here is a 9904-residue protein sequence, read N- to C-terminus: Extracellular matrix-binding protein ebh (9904 aa).

The N-terminal stretch at 1-39 (MNYRDKIQKFSIRKYTVGTFSTVIATLVFLGFNTSQAHA) is a signal peptide. Residues 41–59 (ETNQPASVVKQKQQSNNEQ) are compositionally biased toward polar residues. Disordered regions lie at residues 41-153 (ETNQ…NDNR) and 250-277 (PQRQ…PRSV). Residues 65–78 (SQVQNSQNSQNSQS) show a composition bias toward low complexity. A compositionally biased stretch (polar residues) spans 79-117 (LSATHENEQPNISQANLVDQKVAQSSTTNDEQPASQNVN). Residues 130–140 (PDKEEGKHKQN) are compositionally biased toward basic and acidic residues. Polar residues-rich tracts occupy residues 141–151 (ESQSANKNGND) and 250–266 (PQRQ…QTRS). FIVAR domains follow at residues 2524 to 2580 (AKNH…VSDA), 2610 to 2666 (SKNN…ISEE), 2687 to 2750 (DTHT…VQTA), 2780 to 2836 (AKTK…IAEE), 2864 to 2919 (AKTQ…IRQN), 2947 to 3002 (AKNQ…INTN), 3030 to 3085 (AKTQ…INDK), 3154 to 3212 (AMTK…VNQK), 3280 to 3339 (AMTG…VNNA), 3407 to 3465 (AMGN…VNRA), 3533 to 3591 (AMGN…VTEA), 3659 to 3717 (AMNT…ITQK), 3785 to 3843 (AMAS…VEAA), 3911 to 3969 (AMGN…VEQA), 4037 to 4095 (AMGT…VTAA), 4160 to 4208 (DKDA…VDNA), 4276 to 4334 (AMGA…INGM), 4402 to 4460 (AMTA…VNSA), 4528 to 4586 (AMKG…ITQA), 4654 to 4712 (AMHS…VEQA), 4780 to 4838 (AMGQ…VERA), 4906 to 4964 (AMTA…VTNA), 5032 to 5090 (AMKG…INQA), 5158 to 5216 (AMTN…VESA), 5284 to 5342 (AMSN…VEQA), 5410 to 5468 (AMNQ…INQK), 5536 to 5593 (AMGN…VQAA), 5661 to 5719 (AMGQ…VEAA), 5787 to 5845 (AMQR…VEQA), 5913 to 5971 (AMDQ…VTAA), 6039 to 6097 (AMNQ…VTQA), 6175 to 6223 (DKDQ…VEAA), 6291 to 6349 (AMGN…VEAA), 6417 to 6475 (AMDK…INQA), 6543 to 6601 (AMGN…VEQA), 6669 to 6727 (AMTQ…ITAA), 6795 to 6853 (AMTQ…IQQA), 6921 to 6979 (AMTN…VEQA), 7047 to 7105 (AMTQ…VAQA), 7173 to 7231 (AMGT…VTQA), 7299 to 7357 (AMGN…ITRA), 7425 to 7486 (AMDQ…ITNE), 7551 to 7609 (AMEL…VNGA), 7677 to 7735 (AMGN…VEQA), 7803 to 7860 (AMHG…INQA), 7928 to 7986 (LMDA…VSSA), 8054 to 8112 (AIKA…IDQA), 8180 to 8238 (AMEA…VEQL), 8306 to 8364 (AMQA…VEQL), 8432 to 8490 (AMET…VEQA), 8558 to 8612 (SMDQ…VDQA), 8680 to 8739 (AMDQ…VIKL), and 8934 to 8990 (AMET…INGA). A helical membrane pass occupies residues 9710–9730 (IKNAIGVVGISGLLASFWFFI). Residues 9807–9904 (RRKEDEEDVE…KKKKSKKNKK (98 aa)) are disordered. 2 stretches are compositionally biased toward basic and acidic residues: residues 9822-9832 (TDEKVLKDNEH) and 9871-9881 (QKDNQSKDKKS). Residues 9886–9904 (TSKKVAAKKKKKKSKKNKK) are compositionally biased toward basic residues.

It is found in the cell membrane. The sequence is that of Extracellular matrix-binding protein ebh (ebh) from Staphylococcus aureus (strain MW2).